A 216-amino-acid polypeptide reads, in one-letter code: RNA pyrophosphohydrolase (216 aa).

Residues 6–149 enclose the Nudix hydrolase domain; sequence GFRPNVGIIL…KRDVYQLALT (144 aa). A Nudix box motif is present at residues 38-59; that stretch reads GGIKYGETPMQAMYRELHEETG. The segment at 159-191 is disordered; sequence AQRTDKSRGPRAPRYPRVANGHAASETPAAIDT.

This sequence belongs to the Nudix hydrolase family. RppH subfamily. Requires a divalent metal cation as cofactor.

Accelerates the degradation of transcripts by removing pyrophosphate from the 5'-end of triphosphorylated RNA, leading to a more labile monophosphorylated state that can stimulate subsequent ribonuclease cleavage. The polypeptide is RNA pyrophosphohydrolase (Burkholderia pseudomallei (strain 668)).